The primary structure comprises 197 residues: RNA polymerase II subunit A C-terminal domain phosphatase ssup-72 (197 aa).

At Ser-39 the chain carries Phosphoserine.

It belongs to the SSU72 phosphatase family. In terms of assembly, may interact with synd-1 (via C-terminus); the interaction may prevent ssup-72 binding to RNA polymerase II ama-1. May interact with RNA polymerase II ama-1. In terms of processing, may be phosphorylated by kin-20. Expressed in epidermis, intestine and nervous system.

It localises to the nucleus. It carries out the reaction O-phospho-L-seryl-[protein] + H2O = L-seryl-[protein] + phosphate. The catalysed reaction is O-phospho-L-threonyl-[protein] + H2O = L-threonyl-[protein] + phosphate. In terms of biological role, protein phosphatase that dephosphorylates 'Ser-5' of the heptad repeats YSPTSPS in the C-terminal domain of the large RNA polymerase II subunit ama-1. By regulating the phosphorylation status of ama-1 and thus ama-1 binding to specific polyadenylation sites, regulates alternative polyadenylation of pre-mRNAs, including unc-44 and dlk-1 mRNAs. This results in the tissue-specific expression of unc-44 isoforms. This Caenorhabditis elegans protein is RNA polymerase II subunit A C-terminal domain phosphatase ssup-72.